We begin with the raw amino-acid sequence, 428 residues long: 3-phosphoshikimate 1-carboxyvinyltransferase (428 aa).

Residues Lys-22, Ser-23, and Arg-27 each contribute to the 3-phosphoshikimate site. Lys-22 is a phosphoenolpyruvate binding site. Positions 95 and 123 each coordinate phosphoenolpyruvate. Residues Ser-170, Ser-171, Gln-172, Ser-197, Asp-316, and Lys-343 each coordinate 3-phosphoshikimate. Gln-172 provides a ligand contact to phosphoenolpyruvate. Residue Asp-316 is the Proton acceptor of the active site. 3 residues coordinate phosphoenolpyruvate: Arg-347, Arg-390, and Lys-414.

This sequence belongs to the EPSP synthase family. In terms of assembly, monomer.

The protein localises to the cytoplasm. It carries out the reaction 3-phosphoshikimate + phosphoenolpyruvate = 5-O-(1-carboxyvinyl)-3-phosphoshikimate + phosphate. Its pathway is metabolic intermediate biosynthesis; chorismate biosynthesis; chorismate from D-erythrose 4-phosphate and phosphoenolpyruvate: step 6/7. In terms of biological role, catalyzes the transfer of the enolpyruvyl moiety of phosphoenolpyruvate (PEP) to the 5-hydroxyl of shikimate-3-phosphate (S3P) to produce enolpyruvyl shikimate-3-phosphate and inorganic phosphate. The protein is 3-phosphoshikimate 1-carboxyvinyltransferase of Laribacter hongkongensis (strain HLHK9).